We begin with the raw amino-acid sequence, 445 residues long: Argininosuccinate synthase (445 aa).

Residues Ala-17–Ser-25 and Ala-43 contribute to the ATP site. An L-citrulline-binding site is contributed by Tyr-99. ATP contacts are provided by Gly-129 and Thr-131. Thr-131, Asn-135, and Asp-136 together coordinate L-aspartate. Asn-135 contributes to the L-citrulline binding site. Asp-136 contributes to the ATP binding site. L-citrulline is bound by residues Arg-139 and Ser-192. Asp-194 serves as a coordination point for ATP. L-citrulline contacts are provided by Thr-201, Glu-203, and Glu-280.

This sequence belongs to the argininosuccinate synthase family. Type 2 subfamily. In terms of assembly, homotetramer.

Its subcellular location is the cytoplasm. The enzyme catalyses L-citrulline + L-aspartate + ATP = 2-(N(omega)-L-arginino)succinate + AMP + diphosphate + H(+). It participates in amino-acid biosynthesis; L-arginine biosynthesis; L-arginine from L-ornithine and carbamoyl phosphate: step 2/3. In Burkholderia cenocepacia (strain HI2424), this protein is Argininosuccinate synthase.